A 138-amino-acid chain; its full sequence is Basic phospholipase A2 sistruxin B (138 aa).

Residues 1-16 (MRALWIVAVLLVGVEG) form the signal peptide. 7 disulfide bridges follow: cysteine 42-cysteine 131, cysteine 44-cysteine 60, cysteine 59-cysteine 111, cysteine 65-cysteine 138, cysteine 66-cysteine 104, cysteine 73-cysteine 97, and cysteine 91-cysteine 102. Tyrosine 43, glycine 45, and glycine 47 together coordinate Ca(2+). Histidine 63 is an active-site residue. Aspartate 64 contacts Ca(2+). Aspartate 105 is an active-site residue.

In terms of assembly, heterodimer of an acidic subunit and a basic chain. The acidic subunit is non-toxic, without enzymatic activity and comprises 3 peptides that are cross-linked by 7 disulfide bridges. The basic subunit is toxic, has phospholipase A2 activity and is composed of a single chain. The cofactor is Ca(2+). As to expression, expressed by the venom gland.

The protein localises to the secreted. It carries out the reaction a 1,2-diacyl-sn-glycero-3-phosphocholine + H2O = a 1-acyl-sn-glycero-3-phosphocholine + a fatty acid + H(+). Snake venom phospholipase A2 (PLA2) that shows presynaptic neurotoxicity. PLA2 catalyzes the calcium-dependent hydrolysis of the 2-acyl groups in 3-sn-phosphoglycerides. In Sistrurus tergeminus (Western massasauga), this protein is Basic phospholipase A2 sistruxin B.